The primary structure comprises 25 residues: GRSLVFPEETANSFVELFPAKELSL.

The Pentraxin (PTX) domain maps to G1–L25.

This sequence belongs to the pentraxin family. In terms of assembly, heteropentamer. Discoid arrangement of 5 non-covalently bound subunits 1, 2, 3 and 4. The cofactor is Ca(2+). In terms of processing, glycosylated.

The protein resides in the secreted. Functionally, displays several functions associated with host defense: it promotes agglutination, bacterial capsular swelling, phagocytosis, and complement fixation through its calcium-dependent binding to phosphorylcholine. The sequence is that of C-reactive protein P2 subunit 4 from Gadus morhua (Atlantic cod).